The sequence spans 1454 residues: Probable cleavage and polyadenylation specificity factor subunit 1 (1454 aa).

The disordered stretch occupies residues 736–765; that stretch reads KQSNTRKRKRLGHDAIQSSRGGEQSDAIDP.

It belongs to the CPSF1 family. CPSF is a heterotetramer composed of four distinct subunits 160 (cpsf-1), 100 (cpsf-2), 70 (cpsf-3), and 30 kDa (cpsf-4).

Its subcellular location is the nucleus. CPSF plays a key role in pre-mRNA 3'-end formation, recognizing the AAUAAA signal sequence and interacting with poly(A)polymerase and other factors to bring about cleavage and poly(A) addition. This subunit is involved in the RNA recognition step of the polyadenylation reaction. This Caenorhabditis elegans protein is Probable cleavage and polyadenylation specificity factor subunit 1 (cpsf-1).